Reading from the N-terminus, the 315-residue chain is Glycine--tRNA ligase alpha subunit (315 aa).

The protein belongs to the class-II aminoacyl-tRNA synthetase family. As to quaternary structure, tetramer of two alpha and two beta subunits.

The protein localises to the cytoplasm. It catalyses the reaction tRNA(Gly) + glycine + ATP = glycyl-tRNA(Gly) + AMP + diphosphate. The protein is Glycine--tRNA ligase alpha subunit of Pseudomonas syringae pv. tomato (strain ATCC BAA-871 / DC3000).